Reading from the N-terminus, the 356-residue chain is Holliday junction branch migration complex subunit RuvB (356 aa).

Residues 4-192 form a large ATPase domain (RuvB-L) region; that stretch reads DDTTDATADE…FGFTAHMEFY (189 aa). Residues Leu-31, Arg-32, Gly-73, Lys-76, Thr-77, Thr-78, 139-141, Arg-182, Tyr-192, and Arg-229 contribute to the ATP site; that span reads EDF. Residue Thr-77 participates in Mg(2+) binding. The interval 193–263 is small ATPAse domain (RuvB-S); it reads EPHELERVIH…IAAAALKVYE (71 aa). Residues 266–356 are head domain (RuvB-H); the sequence is ARGLDRLDRG…GNGQGDLFGA (91 aa). DNA-binding residues include Arg-302, Arg-321, and Arg-326.

This sequence belongs to the RuvB family. Homohexamer. Forms an RuvA(8)-RuvB(12)-Holliday junction (HJ) complex. HJ DNA is sandwiched between 2 RuvA tetramers; dsDNA enters through RuvA and exits via RuvB. An RuvB hexamer assembles on each DNA strand where it exits the tetramer. Each RuvB hexamer is contacted by two RuvA subunits (via domain III) on 2 adjacent RuvB subunits; this complex drives branch migration. In the full resolvosome a probable DNA-RuvA(4)-RuvB(12)-RuvC(2) complex forms which resolves the HJ.

The protein resides in the cytoplasm. It carries out the reaction ATP + H2O = ADP + phosphate + H(+). Functionally, the RuvA-RuvB-RuvC complex processes Holliday junction (HJ) DNA during genetic recombination and DNA repair, while the RuvA-RuvB complex plays an important role in the rescue of blocked DNA replication forks via replication fork reversal (RFR). RuvA specifically binds to HJ cruciform DNA, conferring on it an open structure. The RuvB hexamer acts as an ATP-dependent pump, pulling dsDNA into and through the RuvAB complex. RuvB forms 2 homohexamers on either side of HJ DNA bound by 1 or 2 RuvA tetramers; 4 subunits per hexamer contact DNA at a time. Coordinated motions by a converter formed by DNA-disengaged RuvB subunits stimulates ATP hydrolysis and nucleotide exchange. Immobilization of the converter enables RuvB to convert the ATP-contained energy into a lever motion, pulling 2 nucleotides of DNA out of the RuvA tetramer per ATP hydrolyzed, thus driving DNA branch migration. The RuvB motors rotate together with the DNA substrate, which together with the progressing nucleotide cycle form the mechanistic basis for DNA recombination by continuous HJ branch migration. Branch migration allows RuvC to scan DNA until it finds its consensus sequence, where it cleaves and resolves cruciform DNA. The polypeptide is Holliday junction branch migration complex subunit RuvB (Streptomyces avermitilis (strain ATCC 31267 / DSM 46492 / JCM 5070 / NBRC 14893 / NCIMB 12804 / NRRL 8165 / MA-4680)).